The primary structure comprises 263 residues: Imidazole glycerol phosphate synthase subunit HisF (263 aa).

Active-site residues include aspartate 22 and aspartate 141.

This sequence belongs to the HisA/HisF family. In terms of assembly, heterodimer of HisH and HisF.

The protein resides in the cytoplasm. It carries out the reaction 5-[(5-phospho-1-deoxy-D-ribulos-1-ylimino)methylamino]-1-(5-phospho-beta-D-ribosyl)imidazole-4-carboxamide + L-glutamine = D-erythro-1-(imidazol-4-yl)glycerol 3-phosphate + 5-amino-1-(5-phospho-beta-D-ribosyl)imidazole-4-carboxamide + L-glutamate + H(+). It functions in the pathway amino-acid biosynthesis; L-histidine biosynthesis; L-histidine from 5-phospho-alpha-D-ribose 1-diphosphate: step 5/9. Functionally, IGPS catalyzes the conversion of PRFAR and glutamine to IGP, AICAR and glutamate. The HisF subunit catalyzes the cyclization activity that produces IGP and AICAR from PRFAR using the ammonia provided by the HisH subunit. In Clavibacter michiganensis subsp. michiganensis (strain NCPPB 382), this protein is Imidazole glycerol phosphate synthase subunit HisF.